The sequence spans 161 residues: Cell wall protein YLR042C (161 aa).

Positions Met-1–Ala-24 are cleaved as a signal peptide. Residues Asn-77, Asn-104, and Asn-120 are each glycosylated (N-linked (GlcNAc...) asparagine). Positions Phe-111 to Gly-139 are disordered. The segment covering Lys-123 to Thr-137 has biased composition (low complexity). Gly-139 carries the GPI-anchor amidated glycine lipid modification. A propeptide spans Val-140–Ser-161 (removed in mature form).

Post-translationally, the GPI-anchor is attached to the protein in the endoplasmic reticulum and serves to target the protein to the cell surface. There, the glucosamine-inositol phospholipid moiety is cleaved off and the GPI-modified mannoprotein is covalently attached via its lipidless GPI glycan remnant to the 1,6-beta-glucan of the outer cell wall layer.

Its subcellular location is the secreted. It is found in the cell wall. The protein localises to the membrane. The sequence is that of Cell wall protein YLR042C from Saccharomyces cerevisiae (strain ATCC 204508 / S288c) (Baker's yeast).